A 341-amino-acid polypeptide reads, in one-letter code: Ferredoxin--NADP reductase 2 (341 aa).

FAD is bound by residues aspartate 42, glutamine 50, tyrosine 55, isoleucine 95, phenylalanine 129, aspartate 294, and serine 335.

It belongs to the ferredoxin--NADP reductase type 2 family. As to quaternary structure, homodimer. FAD is required as a cofactor.

The catalysed reaction is 2 reduced [2Fe-2S]-[ferredoxin] + NADP(+) + H(+) = 2 oxidized [2Fe-2S]-[ferredoxin] + NADPH. The sequence is that of Ferredoxin--NADP reductase 2 from Chloroherpeton thalassium (strain ATCC 35110 / GB-78).